A 387-amino-acid chain; its full sequence is Phosphoglycerate kinase (387 aa).

Substrate-binding positions include 21-23 (DLN), Arg-36, 59-62 (HLGR), Arg-113, and Arg-146. ATP-binding positions include Lys-197, Glu-314, and 340–343 (GGDT).

It belongs to the phosphoglycerate kinase family. Monomer.

It localises to the cytoplasm. The catalysed reaction is (2R)-3-phosphoglycerate + ATP = (2R)-3-phospho-glyceroyl phosphate + ADP. It functions in the pathway carbohydrate degradation; glycolysis; pyruvate from D-glyceraldehyde 3-phosphate: step 2/5. The protein is Phosphoglycerate kinase of Pseudomonas fluorescens (strain Pf0-1).